Reading from the N-terminus, the 329-residue chain is Biotin synthase (329 aa).

The region spanning 38–262 is the Radical SAM core domain; it reads NTIQVSTLLS…IMPHSYIRLS (225 aa). [4Fe-4S] cluster-binding residues include cysteine 53, cysteine 57, and cysteine 60. [2Fe-2S] cluster is bound by residues cysteine 97, cysteine 128, cysteine 188, and arginine 260.

Belongs to the radical SAM superfamily. Biotin synthase family. Homodimer. [4Fe-4S] cluster is required as a cofactor. It depends on [2Fe-2S] cluster as a cofactor.

The enzyme catalyses (4R,5S)-dethiobiotin + (sulfur carrier)-SH + 2 reduced [2Fe-2S]-[ferredoxin] + 2 S-adenosyl-L-methionine = (sulfur carrier)-H + biotin + 2 5'-deoxyadenosine + 2 L-methionine + 2 oxidized [2Fe-2S]-[ferredoxin]. It functions in the pathway cofactor biosynthesis; biotin biosynthesis; biotin from 7,8-diaminononanoate: step 2/2. Functionally, catalyzes the conversion of dethiobiotin (DTB) to biotin by the insertion of a sulfur atom into dethiobiotin via a radical-based mechanism. This chain is Biotin synthase, found in Acinetobacter baumannii (strain SDF).